Here is a 373-residue protein sequence, read N- to C-terminus: Peptide chain release factor 2 (373 aa).

Position 252 is an N5-methylglutamine (Gln-252).

It belongs to the prokaryotic/mitochondrial release factor family. Post-translationally, methylated by PrmC. Methylation increases the termination efficiency of RF2.

It is found in the cytoplasm. Its function is as follows. Peptide chain release factor 2 directs the termination of translation in response to the peptide chain termination codons UGA and UAA. This chain is Peptide chain release factor 2, found in Staphylococcus saprophyticus subsp. saprophyticus (strain ATCC 15305 / DSM 20229 / NCIMB 8711 / NCTC 7292 / S-41).